Consider the following 257-residue polypeptide: Hydroxyacylglutathione hydrolase (257 aa).

H54, H56, D58, H59, H113, D137, and H175 together coordinate Zn(2+).

Belongs to the metallo-beta-lactamase superfamily. Glyoxalase II family. Monomer. Requires Zn(2+) as cofactor.

It carries out the reaction an S-(2-hydroxyacyl)glutathione + H2O = a 2-hydroxy carboxylate + glutathione + H(+). The protein operates within secondary metabolite metabolism; methylglyoxal degradation; (R)-lactate from methylglyoxal: step 2/2. In terms of biological role, thiolesterase that catalyzes the hydrolysis of S-D-lactoyl-glutathione to form glutathione and D-lactic acid. This is Hydroxyacylglutathione hydrolase from Crocosphaera subtropica (strain ATCC 51142 / BH68) (Cyanothece sp. (strain ATCC 51142)).